The sequence spans 361 residues: S-adenosylmethionine:tRNA ribosyltransferase-isomerase (361 aa).

It belongs to the QueA family. As to quaternary structure, monomer.

The protein resides in the cytoplasm. The catalysed reaction is 7-aminomethyl-7-carbaguanosine(34) in tRNA + S-adenosyl-L-methionine = epoxyqueuosine(34) in tRNA + adenine + L-methionine + 2 H(+). It functions in the pathway tRNA modification; tRNA-queuosine biosynthesis. Transfers and isomerizes the ribose moiety from AdoMet to the 7-aminomethyl group of 7-deazaguanine (preQ1-tRNA) to give epoxyqueuosine (oQ-tRNA). The sequence is that of S-adenosylmethionine:tRNA ribosyltransferase-isomerase from Glaesserella parasuis serovar 5 (strain SH0165) (Haemophilus parasuis).